A 303-amino-acid polypeptide reads, in one-letter code: Peptidyl-prolyl isomerase CWC27 (303 aa).

Residues 7–153 (ASGKCVLYTT…AEVTIPYFDG (147 aa)) enclose the PPIase cyclophilin-type domain. Disordered regions lie at residues 155 to 195 (SGQK…PPLD) and 208 to 274 (ERLT…TDLA).

The protein belongs to the cyclophilin-type PPIase family. CWC27 subfamily. As to quaternary structure, associated with the spliceosome.

It localises to the cytoplasm. The protein resides in the nucleus. The catalysed reaction is [protein]-peptidylproline (omega=180) = [protein]-peptidylproline (omega=0). Its function is as follows. PPIases accelerate the folding of proteins. It catalyzes the cis-trans isomerization of proline imidic peptide bonds in oligopeptides. Involved in pre-mRNA splicing. The protein is Peptidyl-prolyl isomerase CWC27 (CWC27) of Eremothecium gossypii (strain ATCC 10895 / CBS 109.51 / FGSC 9923 / NRRL Y-1056) (Yeast).